A 253-amino-acid polypeptide reads, in one-letter code: DNA repair protein RecO (253 aa).

Belongs to the RecO family.

Involved in DNA repair and RecF pathway recombination. In Dehalococcoides mccartyi (strain ATCC BAA-2266 / KCTC 15142 / 195) (Dehalococcoides ethenogenes (strain 195)), this protein is DNA repair protein RecO.